Consider the following 133-residue polypeptide: Ribosome-binding factor A (133 aa).

This sequence belongs to the RbfA family. As to quaternary structure, monomer. Binds 30S ribosomal subunits, but not 50S ribosomal subunits or 70S ribosomes.

It localises to the cytoplasm. One of several proteins that assist in the late maturation steps of the functional core of the 30S ribosomal subunit. Associates with free 30S ribosomal subunits (but not with 30S subunits that are part of 70S ribosomes or polysomes). Required for efficient processing of 16S rRNA. May interact with the 5'-terminal helix region of 16S rRNA. This Pseudomonas fluorescens (strain ATCC BAA-477 / NRRL B-23932 / Pf-5) protein is Ribosome-binding factor A.